The chain runs to 295 residues: Protoheme IX farnesyltransferase 2 (295 aa).

The next 9 membrane-spanning stretches (helical) occupy residues 9–29, 36–56, 83–103, 108–128, 135–155, 163–183, 209–229, 230–250, and 264–284; these read ITKP…FFLA, FALF…GCVF, LPLA…LLYV, LSAF…SLWL, GTLV…CAVS, VTLL…IAIF, IVLY…GGYA, GLGY…MAWG, and VFGF…VDSQ.

Belongs to the UbiA prenyltransferase family. Protoheme IX farnesyltransferase subfamily.

It localises to the cell inner membrane. The enzyme catalyses heme b + (2E,6E)-farnesyl diphosphate + H2O = Fe(II)-heme o + diphosphate. It participates in porphyrin-containing compound metabolism; heme O biosynthesis; heme O from protoheme: step 1/1. Its function is as follows. Converts heme B (protoheme IX) to heme O by substitution of the vinyl group on carbon 2 of heme B porphyrin ring with a hydroxyethyl farnesyl side group. This Pseudomonas putida (strain ATCC 47054 / DSM 6125 / CFBP 8728 / NCIMB 11950 / KT2440) protein is Protoheme IX farnesyltransferase 2.